The sequence spans 598 residues: MPCIQAQYGTPAPSPGPRDHLAGDLLTPELSKPTMDLASPEAAPAVPTALPSFSTFMDGYTGEFDTFLYQLSGTAQPCSSASSSASSTSSSSATSPASASFKFEDFQVYGCYPGTLSGPLDETLSSSGSDYYGSPCSAPSPSTPSFQPPQLSPWDGSFGPFSPSQTYEGLRAWTEQLPKASGPPQPPAFFSFSPPPGPSPSLAPSPLKLFPSQAAHQLGEGESYSMQTAFPGLVPTSPHLDGSGRLDAPVTSAKARSGAPGGSEGRCAVCGDNASCQHYGVRTCEGCKGFFKRTVQKNAKYICLANKDCPVDKRRRNRCQFCRFQKCLAVGMVKEVVRTDSLKGRRGRLPSKPKQPPETSPAHLLTSLVRAHLDSGPSTSKLDYSKFQELALPHFGKEDAGDVQQFYDLLSGSLEVIRKWAEKIPGFAELSPGDQDLLLESAFLELFILRLAYRSKPAEGKLIFCSGLVLHRLQCARGFGDWIDSILAFSRSLHSLVVDIPAFACLSALVLITDRHGLQEPRRVEELQNRIASCLKEHVSAEAGEPQPASCLSRLLGKLPELRTLCTQGLQRIFYLKLEDLVPPPPIVDKIFMDTLPF.

Disordered regions lie at residues 1 to 43 (MPCI…PEAA) and 128 to 151 (GSDY…PPQL). Positions 134-145 (SPCSAPSPSTPS) are enriched in low complexity. The required for nuclear import stretch occupies residues 171-466 (RAWTEQLPKA…PAEGKLIFCS (296 aa)). Residues 264–339 (EGRCAVCGDN…VGMVKEVVRT (76 aa)) constitute a DNA-binding region (nuclear receptor). 2 NR C4-type zinc fingers span residues 267–287 (CAVC…CEGC) and 303–327 (CLAN…FQKC). Residues 268–354 (AVCGDNASCQ…RRGRLPSKPK (87 aa)) form a required for binding NBRE-containing DNA region. The tract at residues 299 to 361 (AKYICLANKD…KPKQPPETSP (63 aa)) is required for the interaction with RXRA. The residue at position 341 (S341) is a Phosphoserine; by PKA. Residues 341-361 (SLKGRRGRLPSKPKQPPETSP) form a disordered region. S351 carries the post-translational modification Phosphoserine; by PKA, RPS6KA1 and RPS6KA3. An NR LBD domain is found at 360-595 (SPAHLLTSLV…PIVDKIFMDT (236 aa)). Positions 521–544 (PRRVEELQNRIASCLKEHVSAEAG) are binds lipopolysaccharide. An AF-2 region spans residues 584-595 (PPPIVDKIFMDT).

It belongs to the nuclear hormone receptor family. NR4 subfamily. In terms of assembly, binds the NGFI-B response element (NBRE) as a monomer. Binds the Nur response element (NurRE), consisting of two inverse NBRE-related octanucleotide repeats separated by 6 base-pairs, as a dimer. Interacts (via N-terminus) with NLRP3 (via LRR repeat domain); the interaction is direct, requires binding of NR4A1/Nur77 to NBRE-containing dsDNA and lipopolysaccharide, and leads to non-canonical NLRP3 inflammasome activation. Interacts with GADD45GIP1. Interacts with STK11. Interacts with IFI27. Heterodimer (via DNA-binding domain) with RXRA (via C-terminus); DNA-binding of the heterodimer is enhanced by 9-cis retinoic acid. Competes for the RXRA interaction with EP300 and thereby attenuates EP300 mediated acetylation of RXRA. Interacts with NCOA1. Interacts with NCOA2. Interacts with NCOA3. Zn(2+) serves as cofactor. In terms of processing, phosphorylated at Ser-351 by RPS6KA1 and RPS6KA3 in response to mitogenic or stress stimuli. Post-translationally, acetylated by p300/CBP, acetylation increases stability. Deacetylated by HDAC1.

The protein resides in the nucleus. It localises to the cytoplasm. It is found in the cytosol. Its subcellular location is the mitochondrion. Orphan nuclear receptor. Binds the NGFI-B response element (NBRE) 5'-AAAGGTCA-3'. Binds 9-cis-retinoic acid outside of its ligand-binding (NR LBD) domain. Participates in energy homeostasis by sequestrating the kinase STK11 in the nucleus, thereby attenuating cytoplasmic AMPK activation. Regulates the inflammatory response in macrophages by regulating metabolic adaptations during inflammation, including repressing the transcription of genes involved in the citric acid cycle (TCA). Inhibits NF-kappa-B signaling by binding to low-affinity NF-kappa-B binding sites, such as at the IL2 promoter. May act concomitantly with NR4A2 in regulating the expression of delayed-early genes during liver regeneration. Plays a role in the vascular response to injury. Functionally, in the cytosol, upon its detection of both bacterial lipopolysaccharide (LPS) and NBRE-containing mitochondrial DNA released by GSDMD pores during pyroptosis, it promotes non-canonical NLRP3 inflammasome activation by stimulating association of NLRP3 and NEK7. The polypeptide is Nuclear receptor subfamily 4 group A member 1 (NR4A1) (Bos taurus (Bovine)).